The sequence spans 276 residues: Adenylate kinase (276 aa).

51–56 serves as a coordination point for ATP; that stretch reads GAGKGT. The tract at residues 71–100 is NMP; that stretch reads ATGDMLRSQVAKKTPLGQAAKKIMDAGGLV. Residues Thr-72, Arg-77, 98-100, 127-130, and Gln-134 each bind AMP; these read GLV and GFPR. An LID region spans residues 168 to 205; the sequence is GRLVHPASGRSYHVKFNPPKKEMTDDITGEPLIQRSDD. Residues Arg-169 and 178-179 contribute to the ATP site; that span reads SY. Residues Arg-202 and Arg-213 each contribute to the AMP site. Gln-241 is an ATP binding site.

It belongs to the adenylate kinase family. AK2 subfamily. In terms of assembly, monomer.

The protein localises to the cytoplasm. The protein resides in the cytosol. It localises to the mitochondrion intermembrane space. It carries out the reaction AMP + ATP = 2 ADP. Its function is as follows. Catalyzes the reversible transfer of the terminal phosphate group between ATP and AMP. Plays an important role in cellular energy homeostasis and in adenine nucleotide metabolism. Adenylate kinase activity is critical for regulation of the phosphate utilization and the AMP de novo biosynthesis pathways. This Podospora anserina (strain S / ATCC MYA-4624 / DSM 980 / FGSC 10383) (Pleurage anserina) protein is Adenylate kinase.